A 142-amino-acid chain; its full sequence is MFIGEYNHGVDSKNRIIIPSKFREELGESFILTKGLDNCLYIYPMEEWRILEEKLKKLPLTNKDARAFVRFFFSGANEISIDKQGRALIPQNLMKYANINKDIVSIGVATRIEIWSREKWEEYNDANIDYEQIAEKMSELGI.

SpoVT-AbrB domains are found at residues 5–47 (EYNH…PMEE) and 76–119 (ANEI…SREK).

This sequence belongs to the MraZ family. In terms of assembly, forms oligomers.

It localises to the cytoplasm. Its subcellular location is the nucleoid. The protein is Transcriptional regulator MraZ of Clostridium tetani (strain Massachusetts / E88).